The following is a 72-amino-acid chain: MKLSEVRKQLEEARKLSPVELEKLVREKKRELMELRFQASIGQLSQNHKIRDLKRQIARLLTVLNEKRRQNA.

The protein belongs to the universal ribosomal protein uL29 family.

In Thermus thermophilus (strain ATCC BAA-163 / DSM 7039 / HB27), this protein is Large ribosomal subunit protein uL29.